A 703-amino-acid polypeptide reads, in one-letter code: DNA ligase (703 aa).

NAD(+)-binding positions include 44 to 48 (DAEYD), 93 to 94 (SL), and Glu-127. Lys-129 acts as the N6-AMP-lysine intermediate in catalysis. NAD(+) contacts are provided by Arg-150, Glu-186, Lys-302, and Lys-326. Zn(2+) contacts are provided by Cys-420, Cys-422, Cys-444, and Cys-450. The region spanning 625 to 703 (VADSPVAGKT…EDMWFQRIGA (79 aa)) is the BRCT domain.

The protein belongs to the NAD-dependent DNA ligase family. LigA subfamily. Requires Mg(2+) as cofactor. It depends on Mn(2+) as a cofactor.

It catalyses the reaction NAD(+) + (deoxyribonucleotide)n-3'-hydroxyl + 5'-phospho-(deoxyribonucleotide)m = (deoxyribonucleotide)n+m + AMP + beta-nicotinamide D-nucleotide.. Functionally, DNA ligase that catalyzes the formation of phosphodiester linkages between 5'-phosphoryl and 3'-hydroxyl groups in double-stranded DNA using NAD as a coenzyme and as the energy source for the reaction. It is essential for DNA replication and repair of damaged DNA. This Chelativorans sp. (strain BNC1) protein is DNA ligase.